The chain runs to 1044 residues: MLTDGSQHTYQNGETKNSKEHERKCDESAHLQDNSQTTHKKKEKKNSKEKHGIKHSESEHLQDDISQRVTGKGRRRNSKGTPKKLRFNRPRILEDGKKPRNPATTRLRTISNKRRKKDIDSEDEVIPELATPTKESFPKRRKNEKIKRSVARTLNFKQEIVLSCLEFDKICGPIFPRGKKRTTTRRRYDFLCFLLPMPVWKKQSRRSKRRKNMVRWARIASSSKLLEETLPLIVSHPTINGQADASLHIDDTLVRHVVSKQTKKSANNVIEHLNRQITYQKDHGLSSLADVPLHIEDTLIKSASSVLSERPIKKTKDIAKLIKDMGRLKINKKVTTMIKADKKLVTAKVNLDPETIKEWDVLMVNDSPSRSYDDKETEAKWKKEREIFQTRIDLFINRMHRLQGNRKFKQWKGSVVDSVVGVFLTQNTTDYLSSNAFMSVAAKFPVDAREGLSYYIEEPQDAKSSECIILSDESISKVEDHENTAKRKNEKTGIIEDEIVDWNNLRRMYTKEGSRPEMHMDSVNWSDVRLSGQNVLETTIKKRGQFRILSERILKFLNDEVNQNGNIDLEWLRNAPSHLVKRYLLEIEGIGLKSAECVRLLGLKHHAFPVDTNVGRIAVRLGLVPLEPLPNGVQMHQLFEYPSMDSIQKYLWPRLCKLPQETLYELHYQMITFGKVFCTKTIPNCNACPMKSECKYFASAYVSSKVLLESPEEKMHEPNTFMNAHSQDVAVDMTSNINLVEECVSSGCSDQAICYKPLVEFPSSPRAEIPESTDIEDVPFMNLYQSYASVPKIDFDLDALKKSVEDALVISGRMSSSDEEISKALVIPTPENACIPIKPPRKMKYYNRLRTEHVVYVLPDNHELLHDFERRKLDDPSPYLLAIWQPGETSSSFVPPKKKCSSDGSKLCKIKNCSYCWTIREQNSNIFRGTILIPCRTAMRGAFPLNGTYFQTNEVFADHETSLNPIVFRRELCKGLEKRALYCGSTVTSIFKLLDTRRIELCFWTGFLCLRAFDRKQRDPKELVRRLHTPPDERGPKFMSDDDI.

Polar residues predominate over residues 1–15; the sequence is MLTDGSQHTYQNGET. Residues 1–107 form a disordered region; the sequence is MLTDGSQHTY…KPRNPATTRL (107 aa). Over residues 16 to 30 the composition is skewed to basic and acidic residues; sequence KNSKEHERKCDESAH. Residues 38–53 are compositionally biased toward basic residues; that stretch reads THKKKEKKNSKEKHGI. Residues 54–66 show a composition bias toward basic and acidic residues; sequence KHSESEHLQDDIS. Positions 71–89 are enriched in basic residues; that stretch reads GKGRRRNSKGTPKKLRFNR. Residues 348–445 are DEMETER; the sequence is KVNLDPETIK…AFMSVAAKFP (98 aa). Cysteine 678, cysteine 685, cysteine 688, and cysteine 694 together coordinate [4Fe-4S] cluster. A disordered region spans residues 1024-1044; sequence VRRLHTPPDERGPKFMSDDDI.

Belongs to the DNA glycosylase family. DEMETER subfamily. The cofactor is [4Fe-4S] cluster.

It is found in the nucleus. Potential transcriptional activator that may act by nicking the target promoter. Catalyzes the release of 5-methylcytosine (5-meC) from DNA by a glycosylase/lyase mechanism. This is DEMETER-like protein 3 (DML3) from Arabidopsis thaliana (Mouse-ear cress).